The primary structure comprises 467 residues: Peroxisome proliferator-activated receptor alpha (467 aa).

A DNA-binding region (nuclear receptor) is located at residues 99 to 173 (NIECRICGDK…VGMSHNAIRF (75 aa)). 2 consecutive NR C4-type zinc fingers follow at residues 102–122 (CRICGDKASGYHYGVHACEGC) and 139–161 (CDRSCKIQKKNRNKCQYCRFHKC). The NR LBD domain maps to 239-466 (FVIHDMETLC…PLLQEIYRDM (228 aa)). A required for heterodimerization with RXRA region spans residues 304-433 (DQVTLLKYGV…PKLLQKLADL (130 aa)).

Belongs to the nuclear hormone receptor family. NR1 subfamily. Heterodimer; with RXRA. This heterodimerization is required for DNA binding and transactivation activity. Interacts with NCOA3 coactivator. Interacts with CITED2; the interaction stimulates its transcriptional activity. Also interacts with PPARBP in vitro. Interacts with AKAP13, LPIN1, PRDM16 and coactivator NCOA6. Interacts with ASXL1 and ASXL2. Interacts with PER2. Interacts with SIRT1; the interaction seems to be modulated by NAD(+) levels. Interacts with CRY1 and CRY2. In hepatocytes, interacts with PAQR3 and HUWE1; the interactions promote PPARA poylubiquitination and HUWE1-mediated degradation. Ubiquitinated by E3 ubiquitin-protein ligase HUWE1; leading to proteasomal degradation. In terms of processing, phosphorylated.

It localises to the nucleus. Ligand-activated transcription factor. Key regulator of lipid metabolism. Activated by the endogenous ligand 1-palmitoyl-2-oleoyl-sn-glycerol-3-phosphocholine (16:0/18:1-GPC). Activated by oleylethanolamide, a naturally occurring lipid that regulates satiety. Receptor for peroxisome proliferators such as hypolipidemic drugs and fatty acids. Regulates the peroxisomal beta-oxidation pathway of fatty acids. Functions as a transcription activator for the ACOX1 and P450 genes. Transactivation activity requires heterodimerization with RXRA and is antagonized by NR2C2. May be required for the propagation of clock information to metabolic pathways regulated by PER2. The sequence is that of Peroxisome proliferator-activated receptor alpha (PPARA) from Cavia porcellus (Guinea pig).